The sequence spans 166 residues: Interferon gamma (166 aa).

Positions 1-23 (MKYTSYFLALLLCVLLGFSGSYG) are cleaved as a signal peptide. The residue at position 24 (glutamine 24) is a Pyrrolidone carboxylic acid. 2 N-linked (GlcNAc...) asparagine glycosylation sites follow: asparagine 39 and asparagine 106.

Belongs to the type II (or gamma) interferon family. As to quaternary structure, homodimer. Interacts with IFNGR1 (via extracellular domain); this interaction promotes IFNGR1 dimerization. In terms of tissue distribution, released primarily from activated T lymphocytes.

It is found in the secreted. Its function is as follows. Type II interferon produced by immune cells such as T-cells and NK cells that plays crucial roles in antimicrobial, antiviral, and antitumor responses by activating effector immune cells and enhancing antigen presentation. Primarily signals through the JAK-STAT pathway after interaction with its receptor IFNGR1 to affect gene regulation. Upon IFNG binding, IFNGR1 intracellular domain opens out to allow association of downstream signaling components JAK2, JAK1 and STAT1, leading to STAT1 activation, nuclear translocation and transcription of IFNG-regulated genes. Many of the induced genes are transcription factors such as IRF1 that are able to further drive regulation of a next wave of transcription. Plays a role in class I antigen presentation pathway by inducing a replacement of catalytic proteasome subunits with immunoproteasome subunits. In turn, increases the quantity, quality, and repertoire of peptides for class I MHC loading. Increases the efficiency of peptide generation also by inducing the expression of activator PA28 that associates with the proteasome and alters its proteolytic cleavage preference. Up-regulates as well MHC II complexes on the cell surface by promoting expression of several key molecules such as cathepsins B/CTSB, H/CTSH, and L/CTSL. Participates in the regulation of hematopoietic stem cells during development and under homeostatic conditions by affecting their development, quiescence, and differentiation. In Bubalus bubalis (Domestic water buffalo), this protein is Interferon gamma (IFNG).